We begin with the raw amino-acid sequence, 339 residues long: Quinolinate synthase (339 aa).

Positions 63 and 81 each coordinate iminosuccinate. Cys126 serves as a coordination point for [4Fe-4S] cluster. Residues 152–154 and Ser169 each bind iminosuccinate; that span reads YVN. Cys211 is a [4Fe-4S] cluster binding site. Residues 237 to 239 and Thr254 contribute to the iminosuccinate site; that span reads HPE. Cys297 lines the [4Fe-4S] cluster pocket.

This sequence belongs to the quinolinate synthase family. Type 2 subfamily. [4Fe-4S] cluster serves as cofactor.

The protein resides in the cytoplasm. It carries out the reaction iminosuccinate + dihydroxyacetone phosphate = quinolinate + phosphate + 2 H2O + H(+). Its pathway is cofactor biosynthesis; NAD(+) biosynthesis; quinolinate from iminoaspartate: step 1/1. Functionally, catalyzes the condensation of iminoaspartate with dihydroxyacetone phosphate to form quinolinate. The sequence is that of Quinolinate synthase from Xylella fastidiosa (strain Temecula1 / ATCC 700964).